A 359-amino-acid polypeptide reads, in one-letter code: Golgi-resident adenosine 3',5'-bisphosphate 3'-phosphatase (359 aa).

Met1 carries the N-acetylmethionine modification. Residues 1-12 are Cytoplasmic-facing; it reads MAPMGIRLSPLG. The helical transmembrane segment at 13 to 33 threads the bilayer; it reads VAVFCLLGLGVLYHLYSGFLA. Over 34–359 the chain is Lumenal; it reads GRFSLFGLGG…LPDLEKTGHK (326 aa). The tract at residues 86-106 is disordered; it reads ESNVLHEKSKGKTREGAEDKM. Asp110 functions as the Proton acceptor in the catalytic mechanism. Mg(2+)-binding residues include Glu133, Asp174, Leu176, and Asp177. Thr179 serves as the catalytic Proton acceptor. AMP is bound by residues Ser242 and His245. N-linked (GlcNAc...) asparagine glycosylation occurs at Asn259. AMP is bound by residues Gly268 and Lys272. Asp300 is a Mg(2+) binding site.

This sequence belongs to the inositol monophosphatase superfamily. Requires Mg(2+) as cofactor. In terms of processing, contains N-linked glycan resistant to endoglycosydase H.

It localises to the golgi apparatus. The protein resides in the trans-Golgi network membrane. It carries out the reaction adenosine 3',5'-bisphosphate + H2O = AMP + phosphate. Its pathway is sulfur metabolism. Strongly inhibited by lithium. Functionally, exhibits 3'-nucleotidase activity toward adenosine 3',5'-bisphosphate (PAP), namely hydrolyzes adenosine 3',5'-bisphosphate into adenosine 5'-monophosphate (AMP) and a phosphate. May play a role in the formation of skeletal elements derived through endochondral ossification, possibly by clearing adenosine 3',5'-bisphosphate produced by Golgi sulfotransferases during glycosaminoglycan sulfation. Has no activity toward 3'-phosphoadenosine 5'-phosphosulfate (PAPS) or inositol phosphate (IP) substrates including I(1)P, I(1,4)P2, I(1,3,4)P3, I(1,4,5)P3 and I(1,3,4,5)P4. This Homo sapiens (Human) protein is Golgi-resident adenosine 3',5'-bisphosphate 3'-phosphatase.